A 208-amino-acid chain; its full sequence is MDTFKQISGRIAPMLEPNIDTDVIMPKQFLKGIDRQGLDKGVFFDRRFMAGGQPNPDFILNMPGWQSATFLLVGPNFGCGSSREHAVWGLKQLGVRGLIGSTFAGIFDDNCQRNGILTVSLDEPALARLAQLAASADTNSITVSLDRCEITTAEETISFVISELKRAMLAAGEDAIAWTLQYLPEIENFEVAHYSRRPWLKRPASPRG.

The protein belongs to the LeuD family. LeuD type 1 subfamily. Heterodimer of LeuC and LeuD.

It catalyses the reaction (2R,3S)-3-isopropylmalate = (2S)-2-isopropylmalate. It participates in amino-acid biosynthesis; L-leucine biosynthesis; L-leucine from 3-methyl-2-oxobutanoate: step 2/4. Its function is as follows. Catalyzes the isomerization between 2-isopropylmalate and 3-isopropylmalate, via the formation of 2-isopropylmaleate. The protein is 3-isopropylmalate dehydratase small subunit 2 (leuD2) of Salmonella typhimurium (strain LT2 / SGSC1412 / ATCC 700720).